The following is a 121-amino-acid chain: Dihydroneopterin aldolase (121 aa).

Substrate-binding residues include E16 and M111.

The protein belongs to the archaeal dihydroneopterin aldolase family. In terms of assembly, homotetramer.

The catalysed reaction is 7,8-dihydroneopterin = 6-hydroxymethyl-7,8-dihydropterin + glycolaldehyde. It participates in cofactor biosynthesis; 5,6,7,8-tetrahydromethanopterin biosynthesis. Catalyzes the conversion of 7,8-dihydroneopterin (H2Neo) to 6-hydroxymethyl-7,8-dihydropterin (6-HMD). The sequence is that of Dihydroneopterin aldolase from Methanopyrus kandleri (strain AV19 / DSM 6324 / JCM 9639 / NBRC 100938).